The following is a 76-amino-acid chain: U-scoloptoxin(13)-Sm1a (76 aa).

The N-terminal stretch at 1-22 (MAYICAXTLAFLLCVNTGIIQA) is a signal peptide.

This sequence belongs to the scoloptoxin-13 family. Contains 4 disulfide bonds. As to expression, expressed by the venom gland.

Its subcellular location is the secreted. The sequence is that of U-scoloptoxin(13)-Sm1a from Scolopendra morsitans (Tanzanian blue ringleg centipede).